The primary structure comprises 178 residues: Chorion class high-cysteine HCB protein 13 (178 aa).

The first 21 residues, 1 to 21 (MAAKLILFVCAIALVAQSVLG), serve as a signal peptide directing secretion. Positions 22–46 (TGCGCCCRGCGCGCGGCGSRCCDRF) are left arm. Positions 47 to 110 (CLCSNSAAPT…GDGCVGITQS (64 aa)) are central domain. The segment at 111–178 (CGGCGCGCGG…GCGCGGCGCC (68 aa)) is right arm (Gly-rich tandem repeats).

The protein belongs to the chorion protein family.

In terms of biological role, this protein is one of many from the eggshell of the silk moth. The sequence is that of Chorion class high-cysteine HCB protein 13 from Bombyx mori (Silk moth).